The chain runs to 590 residues: MAWMLDCLFASAFEPRPRRVSVLGGAPGQNSDRSMDMVSIHSLSELERLKLQETAYHELVARHFLSEFKPDRALPTDRPNTLEKWFLMLRGQDRAASLKTFGIRLEEVLVNELTRRKQRELTPTMQVEDINGSTGRRRRGNVVQRMLGRMRRFFSRRRNEPTLPREFTRRGRRGAVSADSADELENGALLLQILQLSQLSSPIGQRLLGSKRKMSLNPIAQQIPQIVETCCKFIEKHGLSSVGIFTIEYSLRRVLELRELFDKGLDIVLDDSVNVHDVAELLKEFFREMKDPLLPDDLYMSFLLTATLKPKDQVSALQLLVYLMPPCHSDTLERLLKALHKITENCEDSIGVDGQLVPGNRMTSTNLALVFGTALLKKGKLANKESRKTKLGIDHYVASVNVVRAMIDNWDILFQVPPHIQKEVAKRVWKSSPEALDFIRRRNLRKIQSARIKMEEDALLSDPVENSAEAQAAILAQSQPFDEDPEGAPDVHEVLNDNLNYDFEDESDFEDQDHLDLAEVPYLDVIPNNEDTDSDADVIPGPSEEPAVPASTAGSPDKEEGAAGNPPNADRPLPRVPQGKKGKFATRFFP.

In terms of domain architecture, Rho-GAP spans 214–414; sequence MSLNPIAQQI…AMIDNWDILF (201 aa). The segment at 526–590 is disordered; it reads IPNNEDTDSD…KGKFATRFFP (65 aa).

In terms of assembly, may interacts (via the Rho-GAP domain) with the active form of RAC1.

Its function is as follows. GTPase activator for the Rho-type GTPases by converting them to an inactive GDP-bound state. This Mus musculus (Mouse) protein is Rho GTPase-activating protein 36 (Arhgap36).